A 189-amino-acid polypeptide reads, in one-letter code: 6,7-dimethyl-8-ribityllumazine synthase (189 aa).

Residues Trp31, Ser65–Glu67, and Cys89–Ile91 each bind 5-amino-6-(D-ribitylamino)uracil. Residue Glu94–Thr95 participates in (2S)-2-hydroxy-3-oxobutyl phosphate binding. His97 serves as the catalytic Proton donor. A 5-amino-6-(D-ribitylamino)uracil-binding site is contributed by Phe122. Arg136 is a binding site for (2S)-2-hydroxy-3-oxobutyl phosphate.

The protein belongs to the DMRL synthase family.

The enzyme catalyses (2S)-2-hydroxy-3-oxobutyl phosphate + 5-amino-6-(D-ribitylamino)uracil = 6,7-dimethyl-8-(1-D-ribityl)lumazine + phosphate + 2 H2O + H(+). The protein operates within cofactor biosynthesis; riboflavin biosynthesis; riboflavin from 2-hydroxy-3-oxobutyl phosphate and 5-amino-6-(D-ribitylamino)uracil: step 1/2. Its function is as follows. Catalyzes the formation of 6,7-dimethyl-8-ribityllumazine by condensation of 5-amino-6-(D-ribitylamino)uracil with 3,4-dihydroxy-2-butanone 4-phosphate. This is the penultimate step in the biosynthesis of riboflavin. The protein is 6,7-dimethyl-8-ribityllumazine synthase of Flavobacterium psychrophilum (strain ATCC 49511 / DSM 21280 / CIP 103535 / JIP02/86).